We begin with the raw amino-acid sequence, 138 residues long: NADH-quinone oxidoreductase subunit A 1 (138 aa).

Helical transmembrane passes span 19–39 (FLPL…LLLA), 74–94 (FYLI…IFAW), and 103–123 (LAGL…LVWL).

This sequence belongs to the complex I subunit 3 family. In terms of assembly, NDH-1 is composed of 14 different subunits. Subunits NuoA, H, J, K, L, M, N constitute the membrane sector of the complex.

Its subcellular location is the cell inner membrane. The catalysed reaction is a quinone + NADH + 5 H(+)(in) = a quinol + NAD(+) + 4 H(+)(out). NDH-1 shuttles electrons from NADH, via FMN and iron-sulfur (Fe-S) centers, to quinones in the respiratory chain. The immediate electron acceptor for the enzyme in this species is believed to be ubiquinone. Couples the redox reaction to proton translocation (for every two electrons transferred, four hydrogen ions are translocated across the cytoplasmic membrane), and thus conserves the redox energy in a proton gradient. The sequence is that of NADH-quinone oxidoreductase subunit A 1 from Geobacter metallireducens (strain ATCC 53774 / DSM 7210 / GS-15).